The following is a 149-amino-acid chain: SsrA-binding protein (149 aa).

This sequence belongs to the SmpB family.

The protein resides in the cytoplasm. In terms of biological role, required for rescue of stalled ribosomes mediated by trans-translation. Binds to transfer-messenger RNA (tmRNA), required for stable association of tmRNA with ribosomes. tmRNA and SmpB together mimic tRNA shape, replacing the anticodon stem-loop with SmpB. tmRNA is encoded by the ssrA gene; the 2 termini fold to resemble tRNA(Ala) and it encodes a 'tag peptide', a short internal open reading frame. During trans-translation Ala-aminoacylated tmRNA acts like a tRNA, entering the A-site of stalled ribosomes, displacing the stalled mRNA. The ribosome then switches to translate the ORF on the tmRNA; the nascent peptide is terminated with the 'tag peptide' encoded by the tmRNA and targeted for degradation. The ribosome is freed to recommence translation, which seems to be the essential function of trans-translation. This is SsrA-binding protein from Fervidobacterium nodosum (strain ATCC 35602 / DSM 5306 / Rt17-B1).